A 512-amino-acid polypeptide reads, in one-letter code: 2-isopropylmalate synthase (512 aa).

The region spanning 5–268 (LIIFDTTLRD…ELGIDTQHIV (264 aa)) is the Pyruvate carboxyltransferase domain. Residues Asp14, His202, His204, and Asn239 each coordinate Mn(2+). The tract at residues 394–512 (GFVSLSQRSE…SKAERVAAQG (119 aa)) is regulatory domain.

This sequence belongs to the alpha-IPM synthase/homocitrate synthase family. LeuA type 1 subfamily. Homodimer. Requires Mn(2+) as cofactor.

The protein localises to the cytoplasm. The enzyme catalyses 3-methyl-2-oxobutanoate + acetyl-CoA + H2O = (2S)-2-isopropylmalate + CoA + H(+). It participates in amino-acid biosynthesis; L-leucine biosynthesis; L-leucine from 3-methyl-2-oxobutanoate: step 1/4. Catalyzes the condensation of the acetyl group of acetyl-CoA with 3-methyl-2-oxobutanoate (2-ketoisovalerate) to form 3-carboxy-3-hydroxy-4-methylpentanoate (2-isopropylmalate). The polypeptide is 2-isopropylmalate synthase (Paracidovorax citrulli (strain AAC00-1) (Acidovorax citrulli)).